We begin with the raw amino-acid sequence, 484 residues long: Cobyric acid synthase (484 aa).

Residues 251 to 438 (ALKIAVPVLP…LHGLFASDAY (188 aa)) enclose the GATase cobBQ-type domain. The active-site Nucleophile is the C333. Residue H430 is part of the active site.

This sequence belongs to the CobB/CobQ family. CobQ subfamily.

The protein operates within cofactor biosynthesis; adenosylcobalamin biosynthesis. Functionally, catalyzes amidations at positions B, D, E, and G on adenosylcobyrinic A,C-diamide. NH(2) groups are provided by glutamine, and one molecule of ATP is hydrogenolyzed for each amidation. The protein is Cobyric acid synthase of Rhizobium etli (strain CIAT 652).